We begin with the raw amino-acid sequence, 269 residues long: Energy-coupling factor transporter ATP-binding protein EcfA1 (269 aa).

The ABC transporter domain occupies 8 to 242 (IVFKNVSFQY…AEGLTTIGLD (235 aa)). Position 42–49 (42–49 (GHNGSGKS)) interacts with ATP.

The protein belongs to the ABC transporter superfamily. Energy-coupling factor EcfA family. Forms a stable energy-coupling factor (ECF) transporter complex composed of 2 membrane-embedded substrate-binding proteins (S component), 2 ATP-binding proteins (A component) and 2 transmembrane proteins (T component).

It localises to the cell membrane. Functionally, ATP-binding (A) component of a common energy-coupling factor (ECF) ABC-transporter complex. Unlike classic ABC transporters this ECF transporter provides the energy necessary to transport a number of different substrates. The sequence is that of Energy-coupling factor transporter ATP-binding protein EcfA1 from Staphylococcus aureus (strain bovine RF122 / ET3-1).